A 1338-amino-acid polypeptide reads, in one-letter code: Insulin receptor substrate 2 (1338 aa).

Residues 1 to 12 are compositionally biased toward pro residues; that stretch reads MASPPRHGPPGP. Disordered regions lie at residues 1 to 31 and 49 to 72; these read MASP…NHSV and VLRG…QPPR. The region spanning 16 to 144 is the PH domain; that stretch reads DGPNLNNNNN…WYRALTDLVS (129 aa). The span at 19–28 shows a compositional bias: low complexity; that stretch reads NLNNNNNNNN. Positions 53 to 66 are enriched in gly residues; sequence PGAGGDEATAGGGS. An IRS-type PTB domain is found at 194–298; that stretch reads YREVWQVNLK…EAMKALKELF (105 aa). Positions 303-411 are disordered; it reads RSKSQSSGSS…SHTLSGGCGG (109 aa). Phosphoserine occurs at positions 306 and 346. Position 350 is a phosphothreonine (T350). A phosphoserine mark is found at S365, S384, S388, and S391. R412 bears the Omega-N-methylarginine mark. Positions 428 to 537 are disordered; it reads SRSMSMPVAH…PPARDGGGGG (110 aa). Positions 444–453 are enriched in low complexity; it reads SPGSLSSSSG. The span at 459–471 shows a compositional bias: pro residues; it reads YPPPPGPHPPLPH. Residues 475–493 show a composition bias toward low complexity; the sequence is HGPGQRPSSGSASASGSPS. The residue at position 520 (T520) is a Phosphothreonine. Residue S523 is modified to Phosphoserine. Position 527 is a phosphothreonine (T527). Y540 carries the phosphotyrosine; by INSR modification. Positions 540-543 match the YXXM motif 1 motif; sequence YGYM. S560 is modified (phosphoserine; by PLK1). Residue S577 is modified to Phosphoserine. T579 and T580 each carry phosphothreonine. The residue at position 594 (S594) is a Phosphoserine. A YXXM motif 2 motif is present at residues 598–601; the sequence is YTLM. A phosphoserine mark is found at S608 and S620. 2 positions are modified to phosphotyrosine; by INSR: Y653 and Y675. 2 consecutive short sequence motifs (YXXM motif) follow at residues 653–656 and 675–678; these read YMPM. A phosphoserine mark is found at S679 and S682. The span at 703–719 shows a compositional bias: low complexity; the sequence is PSAGPAGPAPTSAAGRT. Positions 703-739 are disordered; the sequence is PSAGPAGPAPTSAAGRTFPASGGGYKASSPAESSPED. Phosphoserine occurs at positions 735 and 736. The YXXM motif 5 signature appears at 742–745; it reads YMRM. Position 770 is a phosphoserine (S770). A Phosphothreonine modification is found at T779. The residue at position 805 (S805) is a Phosphoserine. The short motif at 823–826 is the YXXM motif 6 element; the sequence is YVLM. S828 carries the post-translational modification Phosphoserine. Residues 840–1101 form a disordered region; the sequence is EPQATPGPSQ…KPEAARVASP (262 aa). A compositionally biased stretch (pro residues) spans 859–870; that stretch reads TQPPHPVVPSPV. S915 bears the Phosphoserine mark. A Phosphotyrosine; by INSR modification is found at Y919. Residues 938-967 are compositionally biased toward low complexity; that stretch reads LLASAASSSSLLSASSPASSLGSGTPGTSS. A Phosphoserine modification is found at S973. A Phosphotyrosine; by INSR modification is found at Y978. Residues 1013 to 1022 show a composition bias toward pro residues; that stretch reads PYPPLPPRPS. Residues 1072-1075 carry the YXXM motif 7 motif; that stretch reads YTEM. Position 1082 is a phosphothreonine (T1082). Residues 1083–1093 are compositionally biased toward pro residues; that stretch reads PPQPIAAPPKP. S1100 carries the post-translational modification Phosphoserine. S1109 bears the Phosphoserine; by PLK1 mark. Residues 1121-1296 form a disordered region; sequence LQASQPPDPH…TRSLGGLISA (176 aa). The segment covering 1150–1165 has biased composition (low complexity); it reads ETFSSTTTVTPVSPSF. Residue T1159 is modified to Phosphothreonine. S1162, S1174, S1176, and S1186 each carry phosphoserine. A compositionally biased stretch (polar residues) spans 1174–1183; the sequence is SASVENVSLR. The segment covering 1188 to 1198 has biased composition (gly residues); sequence GGVGVGPGGGD. S1203 is subject to Phosphoserine. A compositionally biased stretch (gly residues) spans 1224-1236; the sequence is QPGGLVGCPGSGG. Position 1253 is a phosphotyrosine; by INSR (Y1253). Over residues 1263–1277 the composition is skewed to pro residues; the sequence is GLPPQPQPPPPPLPQ. K1331 is covalently cross-linked (Glycyl lysine isopeptide (Lys-Gly) (interchain with G-Cter in ubiquitin)).

In terms of assembly, interacts with PHIP. Interacts with SH2B1; this interaction enhances leptin-induced activation of the PI3-kinase pathway. Interacts with GRB2. Interacts with PIK3R1. Interacts with DVL2; this interaction promotes the Wnt/beta-catenin signaling pathway. In terms of processing, phosphorylation fluctuates in a cell-cycle dependent manner with hyperphosphorylation during mitosis. Phosphorylated at Ser-560 and Ser-1109 by PLK1; these phosphorylations prevent the activation of the PI3K pathway upon growth factor stimulation by inhibiting the binding between IRS2 and the PI3K pathway components and increasing the level of IRS2 protein degradation. In addition, they prevent premature mitotic exit. Monoubiquitinated by NEDD4; leading to enhanced IGF1 signaling. During cell cycle, ubiquitination and proteasomal degradation are controlled by FZR1.

It localises to the cytoplasm. The protein resides in the cytosol. Its function is as follows. Signaling adapter protein that participates in the signal transduction from two prominent receptor tyrosine kinases, insulin receptor/INSR and insulin-like growth factor I receptor/IGF1R. Plays therefore an important role in development, growth, glucose homeostasis as well as lipid metabolism. Upon phosphorylation by the insulin receptor, functions as a signaling scaffold that propagates insulin action through binding to SH2 domain-containing proteins including the p85 regulatory subunit of PI3K, NCK1, NCK2, GRB2 or SHP2. Recruitment of GRB2 leads to the activation of the guanine nucleotide exchange factor SOS1 which in turn triggers the Ras/Raf/MEK/MAPK signaling cascade. Activation of the PI3K/AKT pathway is responsible for most of insulin metabolic effects in the cell, and the Ras/Raf/MEK/MAPK is involved in the regulation of gene expression and in cooperation with the PI3K pathway regulates cell growth and differentiation. Acts a positive regulator of the Wnt/beta-catenin signaling pathway through suppression of DVL2 autophagy-mediated degradation leading to cell proliferation. Plays a role in cell cycle progression by promoting a robust spindle assembly checkpoint (SAC) during M-phase. In macrophages, IL4-induced tyrosine phosphorylation of IRS2 leads to the recruitment and activation of phosphoinositide 3-kinase (PI3K). The protein is Insulin receptor substrate 2 (IRS2) of Homo sapiens (Human).